A 144-amino-acid polypeptide reads, in one-letter code: Large ribosomal subunit protein uL15 (144 aa).

The disordered stretch occupies residues M1–L57. A compositionally biased stretch (gly residues) spans R21–G31. Residues G32–G44 are compositionally biased toward basic residues.

The protein belongs to the universal ribosomal protein uL15 family. In terms of assembly, part of the 50S ribosomal subunit.

Binds to the 23S rRNA. This Vibrio cholerae serotype O1 (strain ATCC 39541 / Classical Ogawa 395 / O395) protein is Large ribosomal subunit protein uL15.